A 196-amino-acid chain; its full sequence is Imidazoleglycerol-phosphate dehydratase (196 aa).

The protein belongs to the imidazoleglycerol-phosphate dehydratase family.

The protein resides in the cytoplasm. The enzyme catalyses D-erythro-1-(imidazol-4-yl)glycerol 3-phosphate = 3-(imidazol-4-yl)-2-oxopropyl phosphate + H2O. It functions in the pathway amino-acid biosynthesis; L-histidine biosynthesis; L-histidine from 5-phospho-alpha-D-ribose 1-diphosphate: step 6/9. This is Imidazoleglycerol-phosphate dehydratase from Zymomonas mobilis subsp. mobilis (strain ATCC 31821 / ZM4 / CP4).